A 27-amino-acid polypeptide reads, in one-letter code: Trypsin inhibitor 5 (27 aa).

Intrachain disulfides connect cysteine 1–cysteine 18, cysteine 8–cysteine 20, and cysteine 14–cysteine 26.

The protein resides in the secreted. In terms of biological role, inhibits trypsin. The sequence is that of Trypsin inhibitor 5 from Sechium edule (Chayote).